Here is a 506-residue protein sequence, read N- to C-terminus: Nondiscriminating glutamyl-tRNA synthetase EARS2, mitochondrial (506 aa).

Residues 1 to 41 constitute a mitochondrion transit peptide; that stretch reads MAALLRRLLQRGRPLAASGRRVGRREARLGTGPGVAVRVRF. 40–42 contacts L-glutamate; that stretch reads RFA. The short motif at 45-53 is the 'HIGH' region element; sequence PTGFLHLGG. An ATP-binding site is contributed by H50. L-glutamate contacts are provided by residues E76, 228–232, and R246; that span reads YHLAC. E249 provides a ligand contact to ATP. The residue at position 256 (K256) is an N6-succinyllysine. 284 to 288 serves as a coordination point for ATP; it reads KLSKR. A 'KMSKS' region motif is present at residues 284 to 288; it reads KLSKR. K486 carries the post-translational modification N6-acetyllysine.

Belongs to the class-I aminoacyl-tRNA synthetase family. Glutamate--tRNA ligase type 1 subfamily.

The protein resides in the mitochondrion matrix. It catalyses the reaction tRNA(Glx) + L-glutamate + ATP = L-glutamyl-tRNA(Glx) + AMP + diphosphate. The catalysed reaction is tRNA(Glu) + L-glutamate + ATP = L-glutamyl-tRNA(Glu) + AMP + diphosphate. The enzyme catalyses tRNA(Gln) + L-glutamate + ATP = L-glutamyl-tRNA(Gln) + AMP + diphosphate. Non-discriminating glutamyl-tRNA synthetase that catalyzes aminoacylation of both mitochondrial tRNA(Glu) and tRNA(Gln) and participates in RNA aminoacylation for mitochondrial protein translation. Attachs glutamate to tRNA(Glu) or tRNA(Gln) in a two-step reaction: glutamate is first activated by ATP to form Glu-AMP and then transferred to the acceptor end of tRNA(Glu) or tRNA(Gln). In vitro, cytoplasmic tRNA(Gln) is slightly glutamylated, but with low activity. The protein is Nondiscriminating glutamyl-tRNA synthetase EARS2, mitochondrial of Macaca fascicularis (Crab-eating macaque).